A 450-amino-acid chain; its full sequence is uncharacterized protein (450 aa).

Transmembrane regions (helical) follow at residues 10 to 30, 53 to 73, 95 to 115, 120 to 140, 148 to 168, 199 to 219, 242 to 262, 267 to 287, 302 to 322, 343 to 363, 378 to 398, and 428 to 448; these read IIVL…LVIA, LGGG…AIAI, TAGN…LFAI, LLPV…SIFN, AVAC…PVGF, LAML…IFIT, IANI…ATFA, TSST…CGIF, LMAM…VINA, IAAL…GSSF, LSFG…AALG, and VVPT…IAAM.

The protein resides in the cell membrane. This is an uncharacterized protein from Haemophilus influenzae (strain ATCC 51907 / DSM 11121 / KW20 / Rd).